The primary structure comprises 120 residues: UPF0102 protein HSM_1206 (120 aa).

The protein belongs to the UPF0102 family.

The protein is UPF0102 protein HSM_1206 of Histophilus somni (strain 2336) (Haemophilus somnus).